The following is a 174-amino-acid chain: B3 domain-containing protein At3g06220 (174 aa).

A DNA-binding region (TF-B3) is located at residues Pro8–Gly101. Residues Glu114–Tyr174 are disordered. Composition is skewed to acidic residues over residues Glu139 to Ser150 and Glu164 to Tyr174.

Its subcellular location is the nucleus. This chain is B3 domain-containing protein At3g06220, found in Arabidopsis thaliana (Mouse-ear cress).